The sequence spans 163 residues: Nucleotide-binding protein C8J_0350 (163 aa).

This sequence belongs to the YajQ family.

Functionally, nucleotide-binding protein. This chain is Nucleotide-binding protein C8J_0350, found in Campylobacter jejuni subsp. jejuni serotype O:6 (strain 81116 / NCTC 11828).